A 312-amino-acid polypeptide reads, in one-letter code: Taste receptor type 2 member 103 (312 aa).

The Extracellular segment spans residues 1–6 (MVLTIR). Residues 7–27 (AILWVTLITIISLEFIIGILG) traverse the membrane as a helical segment. The Cytoplasmic portion of the chain corresponds to 28 to 61 (NVFIALVNIIDWVKRGKISAVDKTYMALAISRTA). The chain crosses the membrane as a helical span at residues 62–82 (FLLSLITGFLVSLLDPALLGM). Topologically, residues 83–92 (RTMVRLLTIS) are extracellular. A helical membrane pass occupies residues 93-113 (WMVTNHFSVWFATCLSIFYFL). Residues 114–132 (KIANFSNSIFLVLKWEAKK) are Cytoplasmic-facing. A helical transmembrane segment spans residues 133–153 (VVSVTLVVSVIILIMNIIVIN). Residues 154–185 (KFTDRLQVNTLQNCSTSNTLKDYGLFLFISTG) lie on the Extracellular side of the membrane. Asparagine 166 carries N-linked (GlcNAc...) asparagine glycosylation. The chain crosses the membrane as a helical span at residues 186–206 (FTLTPFAVSLTMFLLLIFSLW). The Cytoplasmic segment spans residues 207–229 (RHLKNMCHSATGSRDVSTVAHIK). A helical transmembrane segment spans residues 230–250 (GLQTVVTFLLLYTAFVMSLLS). Over 251–264 (ESLNINIQHTNLLS) the chain is Extracellular. A helical transmembrane segment spans residues 265–285 (HFLRSIGVAFPTGHSCVLILG). At 286–312 (NSKLRQASLSVILWLRYKYKHIENWGP) the chain is on the cytoplasmic side.

It belongs to the G-protein coupled receptor T2R family. In terms of tissue distribution, expressed in subsets of taste receptor cells of the tongue and palate epithelium and exclusively in gustducin-positive cells. Expressed in 15% taste bud cells in circumvallate and foliate papillae but only in 2% in fungiform papillae.

It is found in the membrane. Gustducin-coupled receptor implicated in the perception of bitter compounds in the oral cavity and the gastrointestinal tract. Signals through PLCB2 and the calcium-regulated cation channel TRPM5. The chain is Taste receptor type 2 member 103 (Tas2r103) from Mus musculus (Mouse).